A 739-amino-acid chain; its full sequence is Trehalose phosphorylase (739 aa).

Positions 1–26 (MSTPHHQFESKSSTAIRRRLSSSVSS) are excised as a propeptide. The segment at 1-28 (MSTPHHQFESKSSTAIRRRLSSSVSSKQ) is disordered.

This sequence belongs to the glycosyltransferase group 1 family. Glycosyltransferase 4 subfamily. Homodimer.

The enzyme catalyses alpha,alpha-trehalose + phosphate = alpha-D-glucose + alpha-D-glucose 1-phosphate. Reversibly catalyzes the synthesis and degradation of trehalose from glucose and alpha-D-glucose 1-phosphate. The equilibrium lies in the direction of trehalose synthesis. This Pleurotus pulmonarius (Indian oyster mushroom) protein is Trehalose phosphorylase.